Consider the following 149-residue polypeptide: MRASTILFVLGAAILAVIGVTTALDSGEIDKSTQENHRLLRSGSMEQEPDEERKFIKVPSFMNKAAREAKKAKKKAEIANLVWLKLQKYSDSYALNYVDDMVKSGRSADDEIKFLKKHMKVSNNLQRVIEGHFRSHAELGRVLAKPKYK.

The N-terminal stretch at 1-23 (MRASTILFVLGAAILAVIGVTTA) is a signal peptide. The RxLR-dEER motif lies at 38 to 53 (RLLRSGSMEQEPDEER).

This sequence belongs to the RxLR effector family.

The protein resides in the secreted. The protein localises to the host nucleus. It is found in the host cytoplasm. Functionally, secreted effector that completely suppresses the host cell death induced by cell death-inducing proteins. In Plasmopara viticola (Downy mildew of grapevine), this protein is Secreted RxLR effector protein 3.